The primary structure comprises 508 residues: Hydroxymethylglutaryl-CoA synthase, mitochondrial (508 aa).

A mitochondrion-targeting transit peptide spans 1 to 37 (MQRLLTPVRQVLQVKRVMQEASLLPARLLPAAHPSFS). Position 52 is an N6-succinyllysine (lysine 52). The (3S)-3-hydroxy-3-methylglutaryl-CoA site is built by glutamate 80 and alanine 81. Glutamate 132 functions as the Proton donor/acceptor in the catalytic mechanism. (3S)-3-hydroxy-3-methylglutaryl-CoA is bound by residues cysteine 166, asparagine 204, and threonine 208. Residue cysteine 166 is the Acyl-thioester intermediate of the active site. Lysine 243 is modified (N6-acetyllysine). N6-acetyllysine; alternate is present on lysine 256. Lysine 256 bears the N6-succinyllysine; alternate mark. Positions 258 and 301 each coordinate (3S)-3-hydroxy-3-methylglutaryl-CoA. Histidine 301 acts as the Proton donor/acceptor in catalysis. An N6-acetyllysine modification is found at lysine 306. Lysine 310 is a binding site for (3S)-3-hydroxy-3-methylglutaryl-CoA. Lysine 310 carries the post-translational modification N6-acetyllysine; alternate. Lysine 310 carries the N6-succinyllysine; alternate modification. An N6-succinyllysine modification is found at lysine 333. An N6-acetyllysine; alternate mark is found at lysine 342, lysine 350, lysine 354, and lysine 358. N6-succinyllysine; alternate occurs at positions 342, 350, 354, and 358. Asparagine 380 and serine 414 together coordinate (3S)-3-hydroxy-3-methylglutaryl-CoA. Serine 433 bears the Phosphoserine mark. Residue lysine 437 is modified to N6-acetyllysine. Serine 440 carries the phosphoserine modification. At lysine 447 the chain carries N6-acetyllysine; alternate. Lysine 447 is modified (N6-succinyllysine; alternate). The residue at position 456 (serine 456) is a Phosphoserine. Lysine 473 is subject to N6-acetyllysine; alternate. Lysine 473 bears the N6-succinyllysine; alternate mark. Serine 477 carries the phosphoserine modification.

It belongs to the thiolase-like superfamily. HMG-CoA synthase family. In terms of assembly, homodimer. In terms of processing, succinylated. Desuccinylated by SIRT5. Succinylation, at least at Lys-310, inhibits the enzymatic activity.

The protein localises to the mitochondrion. The catalysed reaction is acetoacetyl-CoA + acetyl-CoA + H2O = (3S)-3-hydroxy-3-methylglutaryl-CoA + CoA + H(+). The protein operates within metabolic intermediate biosynthesis; (R)-mevalonate biosynthesis; (R)-mevalonate from acetyl-CoA: step 2/3. In terms of biological role, catalyzes the first irreversible step in ketogenesis, condensing acetyl-CoA to acetoacetyl-CoA to form HMG-CoA, which is converted by HMG-CoA reductase (HMGCR) into mevalonate. The chain is Hydroxymethylglutaryl-CoA synthase, mitochondrial (HMGCS2) from Bos taurus (Bovine).